The following is a 441-amino-acid chain: Chromosome partition protein MukF (441 aa).

A leucine-zipper region spans residues 208-236 (LDETSGNLRELQDTLNAAGDKLQAQLLRI).

Belongs to the MukF family. As to quaternary structure, interacts, and probably forms a ternary complex, with MukE and MukB via its C-terminal region. The complex formation is stimulated by calcium or magnesium. It is required for an interaction between MukE and MukB.

The protein localises to the cytoplasm. It localises to the nucleoid. Involved in chromosome condensation, segregation and cell cycle progression. May participate in facilitating chromosome segregation by condensation DNA from both sides of a centrally located replisome during cell division. Not required for mini-F plasmid partitioning. Probably acts via its interaction with MukB and MukE. Overexpression results in anucleate cells. It has a calcium binding activity. The chain is Chromosome partition protein MukF from Pasteurella multocida (strain Pm70).